The sequence spans 273 residues: 4-hydroxy-tetrahydrodipicolinate reductase (273 aa).

NAD(+) contacts are provided by residues 12–17 (GAGGRM) and Glu-38. Arg-39 provides a ligand contact to NADP(+). Residues 102–104 (GTT) and 126–129 (AANF) each bind NAD(+). Catalysis depends on His-159, which acts as the Proton donor/acceptor. (S)-2,3,4,5-tetrahydrodipicolinate is bound at residue His-160. Lys-163 (proton donor) is an active-site residue. 169–170 (GT) provides a ligand contact to (S)-2,3,4,5-tetrahydrodipicolinate.

This sequence belongs to the DapB family. As to quaternary structure, homotetramer.

The protein resides in the cytoplasm. It catalyses the reaction (S)-2,3,4,5-tetrahydrodipicolinate + NAD(+) + H2O = (2S,4S)-4-hydroxy-2,3,4,5-tetrahydrodipicolinate + NADH + H(+). It carries out the reaction (S)-2,3,4,5-tetrahydrodipicolinate + NADP(+) + H2O = (2S,4S)-4-hydroxy-2,3,4,5-tetrahydrodipicolinate + NADPH + H(+). The protein operates within amino-acid biosynthesis; L-lysine biosynthesis via DAP pathway; (S)-tetrahydrodipicolinate from L-aspartate: step 4/4. In terms of biological role, catalyzes the conversion of 4-hydroxy-tetrahydrodipicolinate (HTPA) to tetrahydrodipicolinate. This is 4-hydroxy-tetrahydrodipicolinate reductase from Shigella boydii serotype 18 (strain CDC 3083-94 / BS512).